The primary structure comprises 140 residues: L-fucose mutarotase (140 aa).

The Proton donor role is filled by His-22. Substrate contacts are provided by residues Asp-30, Arg-107, and 129–131 (YGN).

It belongs to the RbsD / FucU family. FucU mutarotase subfamily. In terms of assembly, homodecamer.

The protein localises to the cytoplasm. It carries out the reaction alpha-L-fucose = beta-L-fucose. The protein operates within carbohydrate metabolism; L-fucose metabolism. Its function is as follows. Involved in the anomeric conversion of L-fucose. The polypeptide is L-fucose mutarotase (Salmonella paratyphi B (strain ATCC BAA-1250 / SPB7)).